We begin with the raw amino-acid sequence, 487 residues long: N-succinylglutamate 5-semialdehyde dehydrogenase (487 aa).

221–226 (GSSRTG) is an NAD(+) binding site. Catalysis depends on residues glutamate 244 and cysteine 278.

This sequence belongs to the aldehyde dehydrogenase family. AstD subfamily.

It catalyses the reaction N-succinyl-L-glutamate 5-semialdehyde + NAD(+) + H2O = N-succinyl-L-glutamate + NADH + 2 H(+). Its pathway is amino-acid degradation; L-arginine degradation via AST pathway; L-glutamate and succinate from L-arginine: step 4/5. Functionally, catalyzes the NAD-dependent reduction of succinylglutamate semialdehyde into succinylglutamate. This chain is N-succinylglutamate 5-semialdehyde dehydrogenase, found in Pseudomonas putida (strain ATCC 700007 / DSM 6899 / JCM 31910 / BCRC 17059 / LMG 24140 / F1).